A 170-amino-acid chain; its full sequence is Protein FAM209 (170 aa).

The first 20 residues, 1–20 (MRTLLRWCLFLSLCVSCACA), serve as a signal peptide directing secretion. A helical membrane pass occupies residues 56-76 (WLGNKWLWLFVAIMIYVMLKF). A disordered region spans residues 83 to 107 (KEQHPPGLRGCQLRSPPKKAQNISP).

As to quaternary structure, interacts with DPY19L2. Interacts with CYLC1; the interaction may be relevant for proper acrosome attachment to the nuclear envelope. As to expression, predominately expressed in testis.

It localises to the nucleus inner membrane. Required for sperm acrosome biogenesis. This is Protein FAM209 from Mus musculus (Mouse).